Reading from the N-terminus, the 239-residue chain is Large ribosomal subunit protein uL3 (239 aa).

An N5-methylglutamine modification is found at Gln151.

The protein belongs to the universal ribosomal protein uL3 family. In terms of assembly, part of the 50S ribosomal subunit. Forms a cluster with proteins L14 and L19. Methylated by PrmB.

Functionally, one of the primary rRNA binding proteins, it binds directly near the 3'-end of the 23S rRNA, where it nucleates assembly of the 50S subunit. The polypeptide is Large ribosomal subunit protein uL3 (Ruegeria sp. (strain TM1040) (Silicibacter sp.)).